Here is a 272-residue protein sequence, read N- to C-terminus: uncharacterized protein (272 aa).

A signal peptide spans 1-20 (MMEPKSIFLLGLLLFRVGKL).

This is an uncharacterized protein from Caenorhabditis elegans.